Reading from the N-terminus, the 640-residue chain is Threonine--tRNA ligase (640 aa).

In terms of domain architecture, TGS spans 1 to 61; the sequence is MPTITLPDGS…DSDATLQIIT (61 aa). The segment at 242-533 is catalytic; the sequence is DHRKIGKRLG…LIEHYEGAFP (292 aa). The Zn(2+) site is built by Cys333, His384, and His510.

Belongs to the class-II aminoacyl-tRNA synthetase family. In terms of assembly, homodimer. Requires Zn(2+) as cofactor.

It localises to the cytoplasm. It carries out the reaction tRNA(Thr) + L-threonine + ATP = L-threonyl-tRNA(Thr) + AMP + diphosphate + H(+). Functionally, catalyzes the attachment of threonine to tRNA(Thr) in a two-step reaction: L-threonine is first activated by ATP to form Thr-AMP and then transferred to the acceptor end of tRNA(Thr). Also edits incorrectly charged L-seryl-tRNA(Thr). The chain is Threonine--tRNA ligase from Pseudomonas fluorescens (strain Pf0-1).